A 507-amino-acid polypeptide reads, in one-letter code: MNRAFCLLARSRRFPRVPSAGAVLSGEAATLPRCAPNVVRMASQNSFRIEYDTFGELKVPTDKYYGAQTVRSTMNFKIGGATERMPIPVIKAFGILKRAAAEVNQEYGLDPKIASAIMKAADEVAEGKLNDHFPLVVWQTGSGTQTNMNVNEVISNRAIEMLGGELGSKKPVHPNDHVNKSQSSNDTFPTAMHIAAALEVHQVLLPGLQKLHDALSAKSKEFAQVIKIGRTHTQDAVPLTLGQEFSGYVQQVQYAMERIKAAMPRIYELAAGGTAVGTGLNTRIGFAEKVAAKVAALTGLPFVTAPNKFEALAAHDALVELSGAMNTTACSLMKIANDIRFLGSGPRSGLGELILPENEPGSSIMPGKVNPTQCEAMTMVAAQVMGNHVAVTVGGSNGHFELNVFKPMMIKNVLHSARLLGDASVSFTENCVVGIQANTERINKLMNESLMLVTALNPHIGYDKAAKIAKTAHKNGSTLKETAIELGYLTAEQFDEWVKPKDMLGPK.

The N-terminal 41 residues, 1–41 (MNRAFCLLARSRRFPRVPSAGAVLSGEAATLPRCAPNVVRM), are a transit peptide targeting the mitochondrion. 3 positions are modified to N6-acetyllysine; alternate: K58, K63, and K77. K58, K63, and K77 each carry N6-succinyllysine; alternate. At T82 the chain carries Phosphothreonine. The residue at position 91 (K91) is an N6-acetyllysine. N6-acetyllysine; alternate is present on residues K112 and K119. N6-succinyllysine; alternate is present on residues K112 and K119. Residues 142 to 144 (SGT), 173 to 176 (HPND), and 183 to 185 (SSN) contribute to the substrate site. K210 is subject to N6-acetyllysine. An N6-acetyllysine; alternate modification is found at K220. Position 220 is an N6-succinyllysine; alternate (K220). Position 231 (T231) interacts with substrate. The Proton donor/acceptor role is filled by H232. Phosphothreonine is present on T233. K289 is modified (N6-acetyllysine; alternate). Residue K289 is modified to N6-succinyllysine; alternate. S362 is an active-site residue. Substrate-binding positions include S363 and 368 to 370 (KVN). Position 363 is a phosphoserine (S363). N6-succinyllysine occurs at positions 464 and 470. An N6-acetyllysine modification is found at K499.

The protein belongs to the class-II fumarase/aspartase family. Fumarase subfamily. In terms of assembly, homotetramer. Interacts with H2AZ1. In terms of processing, phosphorylation at Thr-233 by PRKDC in response to DNA damage promotes translocation to the nucleus and recruitment to DNA double-strand breaks (DSBs).

The protein localises to the mitochondrion. It is found in the cytoplasm. Its subcellular location is the cytosol. It localises to the nucleus. The protein resides in the chromosome. The catalysed reaction is (S)-malate = fumarate + H2O. The protein operates within carbohydrate metabolism; tricarboxylic acid cycle; (S)-malate from fumarate: step 1/1. In terms of biological role, catalyzes the reversible stereospecific interconversion of fumarate to L-malate. Experiments in other species have demonstrated that specific isoforms of this protein act in defined pathways and favor one direction over the other. Its function is as follows. Catalyzes the hydration of fumarate to L-malate in the tricarboxylic acid (TCA) cycle to facilitate a transition step in the production of energy in the form of NADH. Catalyzes the dehydration of L-malate to fumarate. Fumarate metabolism in the cytosol plays a role during urea cycle and arginine metabolism; fumarate being a by-product of the urea cycle and amino-acid catabolism. Also plays a role in DNA repair by promoting non-homologous end-joining (NHEJ). In response to DNA damage and phosphorylation by PRKDC, translocates to the nucleus and accumulates at DNA double-strand breaks (DSBs): acts by catalyzing formation of fumarate, an inhibitor of KDM2B histone demethylase activity, resulting in enhanced dimethylation of histone H3 'Lys-36' (H3K36me2). The sequence is that of Fumarate hydratase, mitochondrial from Rattus norvegicus (Rat).